Here is a 493-residue protein sequence, read N- to C-terminus: GPI alpha-1,6-mannosyltransferase 2 (493 aa).

At 1-13 the chain is on the cytoplasmic side; it reads MGLLDPSQKEVLR. Residues 14-34 form a helical membrane-spanning segment; the sequence is FAVNCRILTLVLQALFNLIIP. Over 35 to 77 the chain is Lumenal; the sequence is DHHADAFCPPRLAPSGSADQLVEGLLGGLSRWDAEHFLFIAEH. Residues 78-98 traverse the membrane as a helical segment; that stretch reads GYLYEHNFAFFPGFPLALLMG. The Cytoplasmic segment spans residues 99 to 113; that stretch reads TELLRPLQGLLSQRS. A helical transmembrane segment spans residues 114 to 134; it reads CLLVSVALLNLLFSVLAAVAL. At 135–136 the chain is on the lumenal side; the sequence is HD. The helical transmembrane segment at 137 to 157 threads the bilayer; it reads LGCLVLHCPRQALCAALLFCI. At 158–161 the chain is on the cytoplasmic side; that stretch reads SPAN. A helical membrane pass occupies residues 162 to 182; sequence VFLAAGYSEALFAFLTFSAMG. The Lumenal segment spans residues 183-192; sequence QLERGRGWAS. Residues 193–213 form a helical membrane-spanning segment; the sequence is GLLFALAAGVRSNGLVSLGFL. At 214–234 the chain is on the cytoplasmic side; it reads LHSQCRGFCSSLAVLSPWKPL. The chain crosses the membrane as a helical span at residues 235-255; sequence VKLMASVCLSVLIVSLPFALF. Residues 256-327 are Lumenal-facing; the sequence is QYRAYIQFCS…RYYELKQVPN (72 aa). A helical transmembrane segment spans residues 328–348; the sequence is FLLATPVTVLVVWATWTYVTT. Residues 349–378 lie on the Cytoplasmic side of the membrane; that stretch reads HPWLCLTLGLQRTKDRENPEKPHRGFLSPK. The chain crosses the membrane as a helical span at residues 379–399; sequence VFVYLVHAAALLVFGGLCMHV. Residues 400-469 are Lumenal-facing; sequence QVLTRFLASS…DWKRCSPVTR (70 aa). Residues 470–490 traverse the membrane as a helical segment; sequence CVLVYFLTYWLLGLILHCNFL. Over 491-493 the chain is Cytoplasmic; sequence PWT.

The protein belongs to the PIGV family. Not N-glycosylated.

The protein localises to the endoplasmic reticulum membrane. It participates in glycolipid biosynthesis; glycosylphosphatidylinositol-anchor biosynthesis. Alpha-1,6-mannosyltransferase that catalyzes the transfer of the second mannose, via an alpha-1,6 bond, from a dolichol-phosphate-mannose (Dol-P-Man) to the alpha-D-Man-(1-&gt;4)-alpha-D-GlcN-(1-&gt;6)-(1-radyl,2-acyl-sn-glycero-3-phospho)-2-acyl-inositol (also termed H2) intermediate to generate an alpha-D-Man-(1-&gt;6)-alpha-D-Man-(1-&gt;4)-alpha-D-GlcN-(1-&gt;6)-(1-radyl,2-acyl-sn-glycero-3-phospho)-2-acyl-inositol (also termed H3) and participates in the seventh step of the glycosylphosphatidylinositol-anchor biosynthesis. Also transfers the second mannose on a 2-PEtn-alpha-D-Man-(1-&gt;4)-alpha-D-GlcN-(1-&gt;6)-(1-radyl,2-acyl-sn-glycero-3-phospho)-2-acyl-inositol (also termed H5). The protein is GPI alpha-1,6-mannosyltransferase 2 of Mus musculus (Mouse).